A 71-amino-acid polypeptide reads, in one-letter code: MRKSFYTWLMTQRHPKSHDPVAILADLVFEDTTFPKHTDSFERVSRYLEDEASFSFNLSEFDRIWEDYLAH.

This sequence belongs to the UPF0346 family.

The chain is UPF0346 protein SMU_1621c from Streptococcus mutans serotype c (strain ATCC 700610 / UA159).